Consider the following 172-residue polypeptide: MTELDHPQHRPNVGVVLFHPDGRVWLGRRHRQAPPYNWQFPQGGVDEGEDLEVAARRELAEETGVTSVELLGRTEGWITYDFPPEVMANPKHARGWRGQKQVWFAYRFVGEESEIDLEADEHIEFDAWRWGRLDETPELIVPFKRGVYEAVVAAFQGFARGDSPVRRREGEN.

Residues 8–153 (QHRPNVGVVL…KRGVYEAVVA (146 aa)) enclose the Nudix hydrolase domain. The Nudix box motif lies at 43-64 (GGVDEGEDLEVAARRELAEETG).

It belongs to the Nudix hydrolase family. RppH subfamily. A divalent metal cation serves as cofactor.

Accelerates the degradation of transcripts by removing pyrophosphate from the 5'-end of triphosphorylated RNA, leading to a more labile monophosphorylated state that can stimulate subsequent ribonuclease cleavage. This is RNA pyrophosphohydrolase from Caulobacter vibrioides (strain ATCC 19089 / CIP 103742 / CB 15) (Caulobacter crescentus).